We begin with the raw amino-acid sequence, 226 residues long: PKHD-type hydroxylase PLES_48951 (226 aa).

Residues 78–178 (KVFPPLFNCY…RYASFFWTQS (101 aa)) form the Fe2OG dioxygenase domain. Positions 96, 98, and 159 each coordinate Fe cation. R169 is a binding site for 2-oxoglutarate.

Requires Fe(2+) as cofactor. The cofactor is L-ascorbate.

The polypeptide is PKHD-type hydroxylase PLES_48951 (Pseudomonas aeruginosa (strain LESB58)).